The sequence spans 1030 residues: Arrestin domain-containing protein F (1030 aa).

Disordered stretches follow at residues 1–27 (MEII…GSKR) and 119–154 (ENKN…NNPL). The segment covering 128–137 (NFDDGEEDDT) has biased composition (acidic residues). Low complexity predominate over residues 142-152 (NINNKNNNNNN). Coiled coils occupy residues 320-374 (HQLE…HNNN) and 544-577 (QKLN…IRDQ). 2 disordered regions span residues 539–572 (SPQS…NSES) and 885–931 (NNEK…NNNN). Basic and acidic residues predominate over residues 547–562 (NKKDKEKEKEKEKEND). The segment covering 910–931 (SPSSSSFLSNSSNTSSSKNNNN) has biased composition (low complexity).

Belongs to the arrestin family.

This chain is Arrestin domain-containing protein F (adcF), found in Dictyostelium discoideum (Social amoeba).